The primary structure comprises 349 residues: tRNA pseudouridine synthase D (349 aa).

Phenylalanine 27 is a substrate binding site. Residue aspartate 80 is the Nucleophile of the active site. Substrate is bound at residue asparagine 129. Residues glycine 155–leucine 303 form the TRUD domain. Position 329 (phenylalanine 329) interacts with substrate.

This sequence belongs to the pseudouridine synthase TruD family.

The enzyme catalyses uridine(13) in tRNA = pseudouridine(13) in tRNA. Functionally, responsible for synthesis of pseudouridine from uracil-13 in transfer RNAs. In Escherichia coli (strain SE11), this protein is tRNA pseudouridine synthase D.